Reading from the N-terminus, the 376-residue chain is tRNA-specific 2-thiouridylase MnmA (376 aa).

Residues 14–21 (GMSGGVDS) and Met-40 contribute to the ATP site. Residues 100-102 (NPD) form an interaction with target base in tRNA region. The active-site Nucleophile is Cys-105. A disulfide bond links Cys-105 and Cys-202. Gly-129 lines the ATP pocket. The interval 152–154 (KDQ) is interaction with tRNA. Catalysis depends on Cys-202, which acts as the Cysteine persulfide intermediate. The interaction with tRNA stretch occupies residues 315-316 (RY).

It belongs to the MnmA/TRMU family.

The protein resides in the cytoplasm. The enzyme catalyses S-sulfanyl-L-cysteinyl-[protein] + uridine(34) in tRNA + AH2 + ATP = 2-thiouridine(34) in tRNA + L-cysteinyl-[protein] + A + AMP + diphosphate + H(+). Catalyzes the 2-thiolation of uridine at the wobble position (U34) of tRNA, leading to the formation of s(2)U34. This Lactococcus lactis subsp. lactis (strain IL1403) (Streptococcus lactis) protein is tRNA-specific 2-thiouridylase MnmA.